A 316-amino-acid chain; its full sequence is Fe-S cluster assembly protein DRE2 (316 aa).

The N-terminal SAM-like domain stretch occupies residues 4–156 (SMPVATTVAA…KPQHVASTSV (153 aa)). The tract at residues 157 to 202 (PLKSRQPGALLNRKKTDPAKKQALWALSSPSTPKIDPEALLTAEDK) is linker. Residues Cys209, Cys223, Cys226, and Cys228 each contribute to the [2Fe-2S] cluster site. Positions 209 to 228 (CEPVRSSAPRRKKACKSCSC) are fe-S binding site A. 4 residues coordinate [4Fe-4S] cluster: Cys279, Cys282, Cys290, and Cys293. 2 short sequence motifs (cx2C motif) span residues 279–282 (CGSC) and 290–293 (CAGC). Positions 279–293 (CGSCFLGDAFRCAGC) are fe-S binding site B.

It belongs to the anamorsin family. Monomer. Interacts with TAH18. Interacts with MIA40. It depends on [2Fe-2S] cluster as a cofactor. The cofactor is [4Fe-4S] cluster.

The protein resides in the cytoplasm. Its subcellular location is the mitochondrion intermembrane space. Its function is as follows. Component of the cytosolic iron-sulfur (Fe-S) protein assembly (CIA) machinery required for the maturation of extramitochondrial Fe-S proteins. Part of an electron transfer chain functioning in an early step of cytosolic Fe-S biogenesis, facilitating the de novo assembly of a [4Fe-4S] cluster on the scaffold complex CFD1-NBP35. Electrons are transferred to DRE2 from NADPH via the FAD- and FMN-containing protein TAH18. TAH18-DRE2 are also required for the assembly of the diferric tyrosyl radical cofactor of ribonucleotide reductase (RNR), probably by providing electrons for reduction during radical cofactor maturation in the catalytic small subunit RNR2. The sequence is that of Fe-S cluster assembly protein DRE2 from Laccaria bicolor (strain S238N-H82 / ATCC MYA-4686) (Bicoloured deceiver).